We begin with the raw amino-acid sequence, 555 residues long: Glucose-6-phosphate isomerase (555 aa).

Glu-365 (proton donor) is an active-site residue. Active-site residues include His-396 and Lys-522.

The protein belongs to the GPI family.

The protein localises to the cytoplasm. It carries out the reaction alpha-D-glucose 6-phosphate = beta-D-fructose 6-phosphate. It functions in the pathway carbohydrate biosynthesis; gluconeogenesis. It participates in carbohydrate degradation; glycolysis; D-glyceraldehyde 3-phosphate and glycerone phosphate from D-glucose: step 2/4. Its function is as follows. Catalyzes the reversible isomerization of glucose-6-phosphate to fructose-6-phosphate. The chain is Glucose-6-phosphate isomerase from Psychrobacter arcticus (strain DSM 17307 / VKM B-2377 / 273-4).